The following is a 347-amino-acid chain: Phosphate acyltransferase (347 aa).

The protein belongs to the PlsX family. Homodimer. Probably interacts with PlsY.

The protein localises to the cytoplasm. The enzyme catalyses a fatty acyl-[ACP] + phosphate = an acyl phosphate + holo-[ACP]. It participates in lipid metabolism; phospholipid metabolism. Functionally, catalyzes the reversible formation of acyl-phosphate (acyl-PO(4)) from acyl-[acyl-carrier-protein] (acyl-ACP). This enzyme utilizes acyl-ACP as fatty acyl donor, but not acyl-CoA. The polypeptide is Phosphate acyltransferase (Lawsonia intracellularis (strain PHE/MN1-00)).